An 876-amino-acid chain; its full sequence is Alanine--tRNA ligase (876 aa).

Zn(2+) contacts are provided by His-565, His-569, Cys-667, and His-671.

Belongs to the class-II aminoacyl-tRNA synthetase family. The cofactor is Zn(2+).

The protein localises to the cytoplasm. The enzyme catalyses tRNA(Ala) + L-alanine + ATP = L-alanyl-tRNA(Ala) + AMP + diphosphate. Its function is as follows. Catalyzes the attachment of alanine to tRNA(Ala) in a two-step reaction: alanine is first activated by ATP to form Ala-AMP and then transferred to the acceptor end of tRNA(Ala). Also edits incorrectly charged Ser-tRNA(Ala) and Gly-tRNA(Ala) via its editing domain. This is Alanine--tRNA ligase from Staphylococcus aureus (strain bovine RF122 / ET3-1).